The sequence spans 728 residues: Catalase-peroxidase 1 (728 aa).

Positions 91-218 (WHSAGTYRTA…LAAVQMGLIY (128 aa)) form a cross-link, tryptophyl-tyrosyl-methioninium (Trp-Tyr) (with M-244). Histidine 92 acts as the Proton acceptor in catalysis. A cross-link (tryptophyl-tyrosyl-methioninium (Tyr-Met) (with W-91)) is located at residues 218 to 244 (YVNPEGPDGNPDPVAAARDIRDTFARM). Histidine 259 is a heme b binding site.

It belongs to the peroxidase family. Peroxidase/catalase subfamily. As to quaternary structure, homodimer or homotetramer. Heme b serves as cofactor. Formation of the three residue Trp-Tyr-Met cross-link is important for the catalase, but not the peroxidase activity of the enzyme.

It carries out the reaction H2O2 + AH2 = A + 2 H2O. It catalyses the reaction 2 H2O2 = O2 + 2 H2O. In terms of biological role, bifunctional enzyme with both catalase and broad-spectrum peroxidase activity. The sequence is that of Catalase-peroxidase 1 from Burkholderia ambifaria (strain MC40-6).